The sequence spans 379 residues: Chaperone protein DnaJ (379 aa).

The region spanning 5–70 (DYYEILGVPK…QKRAAYDQYG (66 aa)) is the J domain. Residues 134–212 (GVTKEIRIPT…CHGHGRIEKT (79 aa)) form a CR-type zinc finger. Zn(2+) is bound by residues Cys-147, Cys-150, Cys-164, Cys-167, Cys-186, Cys-189, Cys-200, and Cys-203. 4 CXXCXGXG motif repeats span residues 147–154 (CEVCHGSG), 164–171 (CPTCHGAG), 186–193 (CPHCQGRG), and 200–207 (CNSCHGHG).

The protein belongs to the DnaJ family. In terms of assembly, homodimer. Zn(2+) serves as cofactor.

The protein resides in the cytoplasm. Functionally, participates actively in the response to hyperosmotic and heat shock by preventing the aggregation of stress-denatured proteins and by disaggregating proteins, also in an autonomous, DnaK-independent fashion. Unfolded proteins bind initially to DnaJ; upon interaction with the DnaJ-bound protein, DnaK hydrolyzes its bound ATP, resulting in the formation of a stable complex. GrpE releases ADP from DnaK; ATP binding to DnaK triggers the release of the substrate protein, thus completing the reaction cycle. Several rounds of ATP-dependent interactions between DnaJ, DnaK and GrpE are required for fully efficient folding. Also involved, together with DnaK and GrpE, in the DNA replication of plasmids through activation of initiation proteins. This is Chaperone protein DnaJ from Cronobacter sakazakii (strain ATCC BAA-894) (Enterobacter sakazakii).